A 353-amino-acid chain; its full sequence is Photosystem II D2 protein (353 aa).

Position 2 is an N-acetylthreonine (threonine 2). Threonine 2 carries the phosphothreonine modification. A helical transmembrane segment spans residues 41-61 (CAYFALGGWFTGTTFVTSWYT). Histidine 118 lines the chlorophyll a pocket. A helical membrane pass occupies residues 125-141 (GFMLRQFELARSVQLRP). Glutamine 130 and asparagine 143 together coordinate pheophytin a. A helical transmembrane segment spans residues 153–166 (VFVSVFLIYPLGQS). Histidine 198 is a binding site for chlorophyll a. A helical transmembrane segment spans residues 208–228 (AALLCAIHGATVENTLFEDGD). 2 residues coordinate a plastoquinone: histidine 215 and phenylalanine 262. Histidine 215 contributes to the Fe cation binding site. Residue histidine 269 participates in Fe cation binding. Residues 279-295 (GLWMSAIGVVGLALNLR) traverse the membrane as a helical segment.

Belongs to the reaction center PufL/M/PsbA/D family. PSII is composed of 1 copy each of membrane proteins PsbA, PsbB, PsbC, PsbD, PsbE, PsbF, PsbH, PsbI, PsbJ, PsbK, PsbL, PsbM, PsbT, PsbX, PsbY, PsbZ, Psb30/Ycf12, at least 3 peripheral proteins of the oxygen-evolving complex and a large number of cofactors. It forms dimeric complexes. It depends on The D1/D2 heterodimer binds P680, chlorophylls that are the primary electron donor of PSII, and subsequent electron acceptors. It shares a non-heme iron and each subunit binds pheophytin, quinone, additional chlorophylls, carotenoids and lipids. There is also a Cl(-1) ion associated with D1 and D2, which is required for oxygen evolution. The PSII complex binds additional chlorophylls, carotenoids and specific lipids. as a cofactor.

The protein resides in the plastid. It localises to the chloroplast thylakoid membrane. The enzyme catalyses 2 a plastoquinone + 4 hnu + 2 H2O = 2 a plastoquinol + O2. In terms of biological role, photosystem II (PSII) is a light-driven water:plastoquinone oxidoreductase that uses light energy to abstract electrons from H(2)O, generating O(2) and a proton gradient subsequently used for ATP formation. It consists of a core antenna complex that captures photons, and an electron transfer chain that converts photonic excitation into a charge separation. The D1/D2 (PsbA/PsbD) reaction center heterodimer binds P680, the primary electron donor of PSII as well as several subsequent electron acceptors. D2 is needed for assembly of a stable PSII complex. This is Photosystem II D2 protein from Drimys granadensis.